We begin with the raw amino-acid sequence, 234 residues long: Sugar fermentation stimulation protein A (234 aa).

A DNA-binding region (H-T-H motif) is located at residues 201–220 (LLSEAQQRGVEILAYKAEIS).

It belongs to the SfsA family.

Binds to DNA non-specifically. Could be a regulatory factor involved in maltose metabolism. The sequence is that of Sugar fermentation stimulation protein A from Shigella flexneri.